The primary structure comprises 164 residues: 6,7-dimethyl-8-ribityllumazine synthase (164 aa).

5-amino-6-(D-ribitylamino)uracil contacts are provided by residues Phe-28, 62–64 (ALE), and 86–88 (AVI). Position 91 to 92 (91 to 92 (ET)) interacts with (2S)-2-hydroxy-3-oxobutyl phosphate. Catalysis depends on His-94, which acts as the Proton donor. Asn-119 is a binding site for 5-amino-6-(D-ribitylamino)uracil. Residue Arg-133 coordinates (2S)-2-hydroxy-3-oxobutyl phosphate.

This sequence belongs to the DMRL synthase family.

It catalyses the reaction (2S)-2-hydroxy-3-oxobutyl phosphate + 5-amino-6-(D-ribitylamino)uracil = 6,7-dimethyl-8-(1-D-ribityl)lumazine + phosphate + 2 H2O + H(+). It participates in cofactor biosynthesis; riboflavin biosynthesis; riboflavin from 2-hydroxy-3-oxobutyl phosphate and 5-amino-6-(D-ribitylamino)uracil: step 1/2. Its function is as follows. Catalyzes the formation of 6,7-dimethyl-8-ribityllumazine by condensation of 5-amino-6-(D-ribitylamino)uracil with 3,4-dihydroxy-2-butanone 4-phosphate. This is the penultimate step in the biosynthesis of riboflavin. The chain is 6,7-dimethyl-8-ribityllumazine synthase from Nitrosomonas europaea (strain ATCC 19718 / CIP 103999 / KCTC 2705 / NBRC 14298).